We begin with the raw amino-acid sequence, 118 residues long: Large ribosomal subunit protein uL18 (118 aa).

The segment at 1 to 24 is disordered; the sequence is MITKPDKNKIRQKRHRRVRGKLSG. Basic residues predominate over residues 10-20; the sequence is IRQKRHRRVRG.

Belongs to the universal ribosomal protein uL18 family. As to quaternary structure, part of the 50S ribosomal subunit; part of the 5S rRNA/L5/L18/L25 subcomplex. Contacts the 5S and 23S rRNAs.

Functionally, this is one of the proteins that bind and probably mediate the attachment of the 5S RNA into the large ribosomal subunit, where it forms part of the central protuberance. This is Large ribosomal subunit protein uL18 from Streptococcus sanguinis (strain SK36).